We begin with the raw amino-acid sequence, 484 residues long: Sorting assembly machinery 50 kDa subunit (484 aa).

It belongs to the SAM50/omp85 family. Component of the mitochondrial outer membrane sorting assembly machinery (SAM or TOB) complex, which at least consists of SAM35, SAM37 and SAM50. Associates with the mitochondrial contact site and cristae organizing system (MICOS) complex (also known as MINOS or MitOS complex).

It localises to the mitochondrion outer membrane. Component of the mitochondrial outer membrane sorting assembly machinery (SAM or TOB) complex, which is required for the sorting of proteins with complicated topology, such as beta-barrel proteins, to the mitochondrial outer membrane after import by the TOM complex. This is Sorting assembly machinery 50 kDa subunit (SAM50) from Saccharomyces cerevisiae (strain ATCC 204508 / S288c) (Baker's yeast).